Reading from the N-terminus, the 2131-residue chain is Protein Ycf2 (2131 aa).

1466-1473 (GSIGTGRS) lines the ATP pocket.

This sequence belongs to the Ycf2 family.

Its subcellular location is the plastid. It is found in the chloroplast stroma. Probable ATPase of unknown function. Its presence in a non-photosynthetic plant (Epifagus virginiana) and experiments in tobacco indicate that it has an essential function which is probably not related to photosynthesis. The sequence is that of Protein Ycf2 from Helianthus annuus (Common sunflower).